A 406-amino-acid polypeptide reads, in one-letter code: Phosphopentomutase (406 aa).

Mn(2+) is bound by residues Asp10, Asp305, His310, Asp346, His347, and His358.

It belongs to the phosphopentomutase family. The cofactor is Mn(2+).

The protein resides in the cytoplasm. The enzyme catalyses 2-deoxy-alpha-D-ribose 1-phosphate = 2-deoxy-D-ribose 5-phosphate. The catalysed reaction is alpha-D-ribose 1-phosphate = D-ribose 5-phosphate. The protein operates within carbohydrate degradation; 2-deoxy-D-ribose 1-phosphate degradation; D-glyceraldehyde 3-phosphate and acetaldehyde from 2-deoxy-alpha-D-ribose 1-phosphate: step 1/2. In terms of biological role, isomerase that catalyzes the conversion of deoxy-ribose 1-phosphate (dRib-1-P) and ribose 1-phosphate (Rib-1-P) to deoxy-ribose 5-phosphate (dRib-5-P) and ribose 5-phosphate (Rib-5-P), respectively. This is Phosphopentomutase from Vibrio campbellii (strain ATCC BAA-1116).